The chain runs to 327 residues: Phosphate acyltransferase (327 aa).

The protein belongs to the PlsX family. Homodimer. Probably interacts with PlsY.

Its subcellular location is the cytoplasm. It carries out the reaction a fatty acyl-[ACP] + phosphate = an acyl phosphate + holo-[ACP]. It functions in the pathway lipid metabolism; phospholipid metabolism. Its function is as follows. Catalyzes the reversible formation of acyl-phosphate (acyl-PO(4)) from acyl-[acyl-carrier-protein] (acyl-ACP). This enzyme utilizes acyl-ACP as fatty acyl donor, but not acyl-CoA. The polypeptide is Phosphate acyltransferase (Thermotoga maritima (strain ATCC 43589 / DSM 3109 / JCM 10099 / NBRC 100826 / MSB8)).